A 558-amino-acid polypeptide reads, in one-letter code: MAKLLSCVLGPRLYKIYRERDSERAPASVPETPTAVTAPHSSSWDTYYQPRALEKHADSILALASVFWSISYYSSPFAFFYLYRKGYLSLSKVVPFSHYAGTLLLLLAGVACLRGIGRWTNPQYRQFITILEATHRNQSSENKRQLANYNFDFRSWPVDFHWEEPSSRKESRGGPSRQGVALLRPEPLHRGTADTLLNRVKKLPCQITSYLVAHTLGRRMLYPGSVYLLQKALMPVLLQGQARLVEECNGRRAKLLACDGNEIDTMFVDRRGTAEPQGQKLVICCEGNAGFYEVGCVSTPLEAGYSVLGWNHPGFAGSTGVPFPQNEANAMDVVVQFAIHRLGFQPQDIIIYAWSIGGFTATWAAMSYPDVSAVILDASFDDLVPLALKVMPDSWRGLVTRTVRQHLNLNNAEQLCRYQGPVLLIRRTKDEIITTTVPEDIMSNRGNDLLLKLLQHRYPRVMAEEGLRVVRQWLEASSQLEEASIYSRWEVEEDWCLSVLRSYQAEHGPDFPWSVGEDMSADGRRQLALFLARKHLHNFEATHCTPLPAQNFQMPWHL.

The next 2 helical transmembrane spans lie at 60-80 (ILAL…FAFF) and 93-113 (VVPF…VACL). At 114-558 (RGIGRWTNPQ…AQNFQMPWHL (445 aa)) the chain is on the cytoplasmic side. The 127-residue stretch at 281-407 (LVICCEGNAG…LVTRTVRQHL (127 aa)) folds into the AB hydrolase-1 domain. Residues Ser355, Asp430, and His507 each act as charge relay system in the active site.

Belongs to the AB hydrolase superfamily. ABHD16 family.

It localises to the membrane. The enzyme catalyses 1-heptadecanoyl-2-(5Z,8Z,11Z,14Z-eicosatetraenoyl)-sn-glycero-3-phosphoserine + H2O = 1-heptadecanoyl-sn-glycero-3-phosphoserine + (5Z,8Z,11Z,14Z)-eicosatetraenoate + H(+). The catalysed reaction is 1-hexadecanoyl-2-(9Z-octadecenoyl)-sn-glycero-3-phospho-L-serine + H2O = 1-hexadecanoyl-sn-glycero-3-phospho-L-serine + (9Z)-octadecenoate + H(+). It carries out the reaction 1-octadecanoyl-2-(9Z,12Z-octadecadienoyl)-sn-glycero-3-phosphoserine + H2O = 1-octadecanoyl-sn-glycero-3-phosphoserine + (9Z,12Z)-octadecadienoate + H(+). It catalyses the reaction 1-heptadecanoyl-2-(5Z,8Z,11Z,14Z-eicosatetraenoyl)-sn-glycero-3-phosphocholine + H2O = 1-heptadecanoyl-sn-glycero-3-phosphocholine + (5Z,8Z,11Z,14Z)-eicosatetraenoate + H(+). The enzyme catalyses 1-hexadecanoyl-2-(9Z-octadecenoyl)-sn-glycero-3-phosphoglycerol + H2O = 1-hexadecanoyl-sn-glycero-3-phosphoglycerol + (9Z)-octadecenoate + H(+). The catalysed reaction is 1-hexadecanoyl-2-(9Z-octadecenoyl)-sn-glycero-3-phospho-(1D-myo-inositol) + H2O = 1-hexadecanoyl-sn-glycero-3-phospho-(1D-myo-inositol) + (9Z)-octadecenoate + H(+). It carries out the reaction 1-heptadecanoyl-2-(5Z,8Z,11Z,14Z-eicosatetraenoyl)-sn-glycero-3-phosphoethanolamine + H2O = 1-heptadecanoyl-sn-glycero-3-phosphoethanolamine + (5Z,8Z,11Z,14Z)-eicosatetraenoate + H(+). It catalyses the reaction 1-hexadecanoyl-2-(9Z-octadecenoyl)-sn-glycero-3-phospho-(1'-sn-glycerol) + H2O = 1-hexadecanoyl-sn-glycero-3-phospho-(1'-sn-glycerol) + (9Z)-octadecenoate + H(+). The enzyme catalyses Hydrolyzes glycerol monoesters of long-chain fatty acids.. The catalysed reaction is 1-tetradecanoylglycerol + H2O = tetradecanoate + glycerol + H(+). It carries out the reaction 2-hexadecanoylglycerol + H2O = glycerol + hexadecanoate + H(+). It catalyses the reaction 1-(9Z-octadecenoyl)-glycerol + H2O = glycerol + (9Z)-octadecenoate + H(+). The enzyme catalyses 2-(9Z-octadecenoyl)-glycerol + H2O = glycerol + (9Z)-octadecenoate + H(+). The catalysed reaction is 2-(9Z,12Z-octadecadienoyl)-glycerol + H2O = (9Z,12Z)-octadecadienoate + glycerol + H(+). It carries out the reaction 1-(5Z,8Z,11Z,14Z-eicosatetraenoyl)-glycerol + H2O = glycerol + (5Z,8Z,11Z,14Z)-eicosatetraenoate + H(+). It catalyses the reaction 2-(5Z,8Z,11Z,14Z-eicosatetraenoyl)-glycerol + H2O = glycerol + (5Z,8Z,11Z,14Z)-eicosatetraenoate + H(+). The enzyme catalyses prostaglandin D2-1-glycerol ester + H2O = prostaglandin D2 + glycerol + H(+). The catalysed reaction is 2-glyceryl-15-deoxy-Delta(12,14)-prostaglandin J2 + H2O = 15-deoxy-Delta(12,14)-prostaglandin J2 + glycerol + H(+). It carries out the reaction 1-(9Z,12Z-octadecadienoyl)-glycerol + H2O = (9Z,12Z)-octadecadienoate + glycerol + H(+). Its function is as follows. Phosphatidylserine (PS) lipase that mediates the hydrolysis of phosphatidylserine to generate lysophosphatidylserine (LPS). LPS constitutes a class of signaling lipids that regulates immunological and neurological processes. Has no activity towards diacylglycerol, triacylglycerol or lysophosphatidylserine lipase. Also has monoacylglycerol lipase activity, with preference for 1-(9Z,12Z-octadecadienoyl)-glycerol (1-LG) and 2-glyceryl-15-deoxy-Delta(12,14)-prostaglandin J2 (15d-PGJ(2)-G). The chain is Phosphatidylserine lipase ABHD16A from Pongo abelii (Sumatran orangutan).